A 118-amino-acid chain; its full sequence is Large ribosomal subunit protein bL20 (118 aa).

Belongs to the bacterial ribosomal protein bL20 family.

Functionally, binds directly to 23S ribosomal RNA and is necessary for the in vitro assembly process of the 50S ribosomal subunit. It is not involved in the protein synthesizing functions of that subunit. The polypeptide is Large ribosomal subunit protein bL20 (Francisella tularensis subsp. novicida (strain U112)).